A 158-amino-acid polypeptide reads, in one-letter code: Mitotic-spindle organizing protein 2 (158 aa).

Ser34 carries the phosphoserine modification. Positions 81 to 158 (AGQRVASDSQ…PGRSPPRSGT (78 aa)) are disordered. The span at 110–119 (KGGGALGGGP) shows a compositional bias: gly residues. A Phosphoserine modification is found at Ser152.

Belongs to the MOZART2 family. As to quaternary structure, associates with the gamma-tubulin ring complex (gTuRC) consisting of TUBGCP2, TUBGCP3, TUBGCP4, TUBGCP5 and TUBGCP6 and gamma-tubulin TUBG1 or TUBG2; within the complex, interacts with TUBGCP2; the interaction plays a role in gTuRC activation.

The protein localises to the cytoplasm. Its subcellular location is the cytoskeleton. The protein resides in the microtubule organizing center. It is found in the centrosome. It localises to the spindle. Required for the recruitment and the assembly of the gamma-tubulin ring complex (gTuRC) at the centrosome. The gTuRC regulates the minus-end nucleation of alpha-beta tubulin heterodimers that grow into microtubule protafilaments, a critical step in centrosome duplication and spindle formation. This chain is Mitotic-spindle organizing protein 2 (MZT2), found in Bos taurus (Bovine).